The primary structure comprises 22 residues: Motilin (22 aa).

The tract at residues 1–22 (FVPIFTHSELQKIREKERNKGQ) is disordered. Residues 9-22 (ELQKIREKERNKGQ) are compositionally biased toward basic and acidic residues.

Belongs to the motilin family.

Its subcellular location is the secreted. Functionally, plays an important role in the regulation of interdigestive gastrointestinal motility and indirectly causes rhythmic contraction of duodenal and colonic smooth muscle. The chain is Motilin (MLN) from Canis lupus familiaris (Dog).